A 1203-amino-acid chain; its full sequence is DNA-directed RNA polymerase subunit beta' (1203 aa).

Positions 60, 62, 75, and 78 each coordinate Zn(2+). Mg(2+)-binding residues include Asp-449, Asp-451, and Asp-453. The Zn(2+) site is built by Cys-818, Cys-892, Cys-899, and Cys-902. A disordered region spans residues Arg-1180 to Val-1203. Positions Glu-1190–Val-1203 are enriched in acidic residues.

The protein belongs to the RNA polymerase beta' chain family. As to quaternary structure, the RNAP catalytic core consists of 2 alpha, 1 beta, 1 beta' and 1 omega subunit. When a sigma factor is associated with the core the holoenzyme is formed, which can initiate transcription. The cofactor is Mg(2+). Zn(2+) serves as cofactor.

The catalysed reaction is RNA(n) + a ribonucleoside 5'-triphosphate = RNA(n+1) + diphosphate. Functionally, DNA-dependent RNA polymerase catalyzes the transcription of DNA into RNA using the four ribonucleoside triphosphates as substrates. This Oceanobacillus iheyensis (strain DSM 14371 / CIP 107618 / JCM 11309 / KCTC 3954 / HTE831) protein is DNA-directed RNA polymerase subunit beta'.